The primary structure comprises 102 residues: Large ribosomal subunit protein uL23 (102 aa).

It belongs to the universal ribosomal protein uL23 family. As to quaternary structure, part of the 50S ribosomal subunit. Contacts protein L29, and trigger factor when it is bound to the ribosome.

Functionally, one of the early assembly proteins it binds 23S rRNA. One of the proteins that surrounds the polypeptide exit tunnel on the outside of the ribosome. Forms the main docking site for trigger factor binding to the ribosome. In Paramagnetospirillum magneticum (strain ATCC 700264 / AMB-1) (Magnetospirillum magneticum), this protein is Large ribosomal subunit protein uL23.